A 251-amino-acid chain; its full sequence is Pyrroloquinoline-quinone synthase (251 aa).

Belongs to the PqqC family.

The enzyme catalyses 6-(2-amino-2-carboxyethyl)-7,8-dioxo-1,2,3,4,7,8-hexahydroquinoline-2,4-dicarboxylate + 3 O2 = pyrroloquinoline quinone + 2 H2O2 + 2 H2O + H(+). It participates in cofactor biosynthesis; pyrroloquinoline quinone biosynthesis. Functionally, ring cyclization and eight-electron oxidation of 3a-(2-amino-2-carboxyethyl)-4,5-dioxo-4,5,6,7,8,9-hexahydroquinoline-7,9-dicarboxylic-acid to PQQ. This chain is Pyrroloquinoline-quinone synthase, found in Klebsiella pneumoniae subsp. pneumoniae (strain ATCC 700721 / MGH 78578).